Here is a 141-residue protein sequence, read N- to C-terminus: Extracellular globin-1 (141 aa).

The 141-residue stretch at Asp-1–Pro-141 folds into the Globin domain. A disulfide bond links Cys-2 and Cys-131. Heme b is bound at residue His-94.

This sequence belongs to the globin family. As to quaternary structure, the giant hemoglobins of worms are formed of a monomeric subunit and a disulfide-bonded trimer. This subunit is monomeric.

It localises to the secreted. The sequence is that of Extracellular globin-1 from Metaphire sieboldi (Earthworm).